The primary structure comprises 557 residues: Hepatocyte nuclear factor 1-beta (557 aa).

A dimerization region spans residues 1–31; sequence MVSKLTSLQQELLSALLSSGVTKEVLVQALE. The region spanning 1-32 is the HNF-p1 domain; it reads MVSKLTSLQQELLSALLSSGVTKEVLVQALEE. Residues Ser-49, Ser-52, Ser-75, and Ser-80 each carry the phosphoserine modification. The interval 64–85 is disordered; it reads TLTNGHAKGRLSGDEGSEDGDD. Residues 93–188 form the POU-specific atypical domain; sequence KELQALNTEE…ILRQFNQTVQ (96 aa). A DNA-binding region (homeobox; HNF1-type) is located at residues 231-311; that stretch reads MRRNRFKWGP…NRRKEEAFRQ (81 aa). A disordered region spans residues 324 to 352; that stretch reads HSLNPLLSHGSPHHQPSSSPPNKLSGVRY. Residues 328-344 show a composition bias toward low complexity; that stretch reads PLLSHGSPHHQPSSSPP.

Belongs to the HNF1 homeobox family. As to quaternary structure, binds DNA as a dimer. Can form homodimer or heterodimer with HNF1-alpha. Interacts (via HNF-p1 domain) with PCBD1; the interaction increases its transactivation activity.

It is found in the nucleus. In terms of biological role, transcription factor that binds to the inverted palindrome 5'-GTTAATNATTAAC-3'. Binds to the FPC element in the cAMP regulatory unit of the PLAU gene. Transcriptional activity is increased by coactivator PCBD1. The polypeptide is Hepatocyte nuclear factor 1-beta (HNF1B) (Homo sapiens (Human)).